Reading from the N-terminus, the 251-residue chain is L,D-transpeptidase 1 (251 aa).

The N-terminal stretch at 1–28 (MRRVVRYLSVVVAITLMLTAESVSIATA) is a signal peptide. The L,D-TPase catalytic domain maps to 125–250 (LIGVASISAH…VTVGDPIEVV (126 aa)). Substrate-binding positions include tyrosine 190 and 203–204 (SG). Histidine 208 serves as the catalytic Proton donor/acceptor. The Nucleophile role is filled by cysteine 226. Asparagine 228 contacts substrate.

As to quaternary structure, monomer.

It is found in the periplasm. It participates in cell wall biogenesis; peptidoglycan biosynthesis. Is irreversibly inactivated by the beta-lactams carbapenems via the formation of a covalent adduct resulting from acylation of the catalytic Cys. Functionally, generates 3-&gt;3 cross-links in peptidoglycan, catalyzing the cleavage of the mDap(3)-D-Ala(4) bond of a tetrapeptide donor stem and the formation of a bond between the carbonyl of mDap(3) of the donor stem and the side chain of mDap(3) of the acceptor stem. Is specific for donor substrates containing a stem tetrapeptide since it cannot use pentapeptide stems. In Mycobacterium tuberculosis (strain CDC 1551 / Oshkosh), this protein is L,D-transpeptidase 1 (ldtA).